Here is a 233-residue protein sequence, read N- to C-terminus: Small ribosomal subunit protein uS3 (233 aa).

The KH type-2 domain occupies 39–107 (VRQFLNKELE…PAQINIAEVR (69 aa)).

It belongs to the universal ribosomal protein uS3 family. Part of the 30S ribosomal subunit. Forms a tight complex with proteins S10 and S14.

Functionally, binds the lower part of the 30S subunit head. Binds mRNA in the 70S ribosome, positioning it for translation. This chain is Small ribosomal subunit protein uS3, found in Edwardsiella ictaluri (strain 93-146).